A 784-amino-acid chain; its full sequence is MKKRIPTLLATMIATALYSQQGLAADLASQCMLGVPSYDRPLVQGDTNDLPVTINADHAKGDYPDDAVFTGSVDIMQGNSRLQADEVQLHQKEAPGQPEPVRTVDALGNVHYDDNQVILKGPKGWANLNTKDTNVWEGDYQMVGRQGRGKADLMKQRGENRYTILDNGSFTSCLPGSDTWSVVGSEIIHDREEQVAEIWNARFKVGPVPIFYSPYLQLPVGDKRRSGFLIPNAKYTTTNYFEFYLPYYWNIAPNMDATITPHYMHRRGNIMWENEFRYLSQAGAGLMELDYLPSDKVYEDEHPNDDSSRRWLFYWNHSGVMDQVWRFNVDYTKVSDPSYFNDFDNKYGSSTDGYATQKFSVGYAVQNFNATVSTKQFQVFSEQNTSSYSAEPQLDVNYYQNDVGPFDTRIYGQAVHFVNTRDDMPEATRVHLEPTINLPLSNNWGSINTEAKFLATHYQQTNLDWYNSRNTTKLDESVNRVMPQFKVDGKMVFERDIEMLAPGYTQTLEPRAQYLYVPYRDQSDIYNYDSSLLQSDYSGLFRDRTYGGLDRIASANQVTTGVTSRIYDDAAVERFNISVGQIYYFTESRTGDDNITWENDDKTGSLVWAGDTYWRISERWGLRGGIQYDTRLDNVATSNSSIEYRRDEDRLVQLNYHYASPEYIQATLPKYYSTAEQYKNGISQVGAVASRPIADRWSIVGAYYYDTNANKQADSMLGVQYSSCCYAIRVGYERKLNGWDNDKQHAVYDNAIGFNIELRGLSSNYGLGTQEMLRSNILPYQNTL.

Positions 1-24 (MKKRIPTLLATMIATALYSQQGLA) are cleaved as a signal peptide. Cystine bridges form between cysteine 31–cysteine 724 and cysteine 173–cysteine 725.

The protein belongs to the LptD family. In terms of assembly, component of the lipopolysaccharide transport and assembly complex. Interacts with LptE and LptA. In terms of processing, contains two intramolecular disulfide bonds.

The protein localises to the cell outer membrane. Together with LptE, is involved in the assembly of lipopolysaccharide (LPS) at the surface of the outer membrane. The protein is LPS-assembly protein LptD of Shigella flexneri serotype 5b (strain 8401).